Reading from the N-terminus, the 278-residue chain is Endoplasmic reticulum junction formation protein lunapark (278 aa).

The Cytoplasmic portion of the chain corresponds to 1 to 45 (MFSALGKWVRGSRNDKDFVTKYTADLSQITSQIHQLDVALKKSQS). A helical membrane pass occupies residues 46-66 (ILSQWQSNLTFYGIALTVLAL). At 67-77 (SYTYWEYHGYR) the chain is on the lumenal side. Residues 78–98 (PYLVVTALLCIGSLILFKWAL) traverse the membrane as a helical segment. At 99 to 278 (TKLYAFYNNN…PSQSEKEKTK (180 aa)) the chain is on the cytoplasmic side. The stretch at 107 to 183 (NNRLRKLAKL…ELEKFKKESH (77 aa)) forms a coiled coil. The segment at 223–247 (CPQCHWKSNCYRLASKPIIFICPHC) adopts a C4-type; plays a role in ER morphology zinc-finger fold. The interval 258–278 (EDAIEAKQPAQPSQSEKEKTK) is disordered.

This sequence belongs to the lunapark family. Interacts with RTN1; this interaction is negatively regulated by SEY1. Interacts with SEY1 and YOP1.

It is found in the endoplasmic reticulum membrane. Functionally, plays a role in tubular endoplasmic reticulum network formation and maintenance. Works in conjunction with the ER shaping proteins (reticulons RTN1 and RTN2, YOP1), and in antagonism to SEY1 to maintain the network in a dynamic equilibrium. May counterbalance SEY1-directed polygon formation by promoting polygon loss through ring closure. The chain is Endoplasmic reticulum junction formation protein lunapark (LNP1) from Saccharomyces cerevisiae (strain ATCC 204508 / S288c) (Baker's yeast).